The chain runs to 209 residues: Orotate phosphoribosyltransferase (209 aa).

5-phospho-alpha-D-ribose 1-diphosphate-binding positions include arginine 96, lysine 100, histidine 102, and 122-130 (EDLISTGGS). Serine 126 is a binding site for orotate.

It belongs to the purine/pyrimidine phosphoribosyltransferase family. PyrE subfamily. In terms of assembly, homodimer. Mg(2+) serves as cofactor.

The enzyme catalyses orotidine 5'-phosphate + diphosphate = orotate + 5-phospho-alpha-D-ribose 1-diphosphate. It participates in pyrimidine metabolism; UMP biosynthesis via de novo pathway; UMP from orotate: step 1/2. In terms of biological role, catalyzes the transfer of a ribosyl phosphate group from 5-phosphoribose 1-diphosphate to orotate, leading to the formation of orotidine monophosphate (OMP). The protein is Orotate phosphoribosyltransferase of Lactococcus lactis subsp. cremoris (strain MG1363).